A 239-amino-acid chain; its full sequence is Uridylate kinase (239 aa).

Position 13 to 16 (13 to 16 (KVSG)) interacts with ATP. Residue Gly-55 participates in UMP binding. Gly-56 and Arg-60 together coordinate ATP. UMP-binding positions include Asp-75 and 136–143 (TGNPFFTT). Residues Thr-163, Gln-164, Tyr-169, and Asp-172 each contribute to the ATP site.

This sequence belongs to the UMP kinase family. As to quaternary structure, homohexamer.

It is found in the cytoplasm. The catalysed reaction is UMP + ATP = UDP + ADP. It functions in the pathway pyrimidine metabolism; CTP biosynthesis via de novo pathway; UDP from UMP (UMPK route): step 1/1. With respect to regulation, inhibited by UTP. In terms of biological role, catalyzes the reversible phosphorylation of UMP to UDP. The chain is Uridylate kinase from Bartonella henselae (strain ATCC 49882 / DSM 28221 / CCUG 30454 / Houston 1) (Rochalimaea henselae).